Here is a 175-residue protein sequence, read N- to C-terminus: Tumor necrosis factor receptor superfamily member 13C (175 aa).

At 1-71 (MGARRLRVRS…EGSALRPDVA (71 aa)) the chain is on the extracellular side. The TNFR-Cys; truncated repeat unit spans residues 21–38 (QCNQTECFDPLVRNCVSC). Disulfide bonds link Cys-22–Cys-35 and Cys-27–Cys-38. Residue Asn-23 is glycosylated (N-linked (GlcNAc...) asparagine). Residues 29–34 (DPLVRN) form an essential for TNFSF13B/TALL1/BAFF/BLyS binding region. The helical; Signal-anchor for type III membrane protein transmembrane segment at 72-92 (LLVGAPALLGLILALTLVGLV) threads the bilayer. Topologically, residues 93-175 (SLVSWRWRQQ…VTTKTAGPEQ (83 aa)) are cytoplasmic. The disordered stretch occupies residues 124–175 (VPSSETPHASAPTWPPLKEDADSALPRHSVPVPATELGSTELVTTKTAGPEQ). The segment covering 160 to 175 (LGSTELVTTKTAGPEQ) has biased composition (polar residues).

As to expression, highly expressed in spleen and testis; detected at lower levels in lung and thymus.

The protein resides in the membrane. In terms of biological role, B-cell receptor specific for TNFSF13B/TALL1/BAFF/BLyS. Promotes the survival of mature B-cells and the B-cell response. The polypeptide is Tumor necrosis factor receptor superfamily member 13C (Tnfrsf13c) (Mus musculus (Mouse)).